The sequence spans 431 residues: MARCCRHLAVFLCVLLMLSLCKALSSNVDDGYGHEDGSFESDSLLKLNNDDVLSLISSDETTLEASTVSVSNFGAKGDGKTDDTQAFKKAWKKACSTNGVTTFLVPKGKTYLLKSTRFRGPCKSLRNFQILGTLSASTKRSDYKDKNHWLILEDVNNLSIDGGSTGIINGNGKTWWQNSCKIDKSKPCTKAPTALTLYNLKNLNVKNLRVKNAQQIQISIEKCNKVEVSNVEITAPGDSPNTDGIHITNTQNIRVSNSDIGTGDDCISIEDGTQNLQIFDLTCGPGHGISIGSLGDDNSKAYVSGINVDGAKFSESDNGVRIKTYQGGSGTAKNIKFQNIRMENVKNPIIIDQDYCDKDKCEDQESAVQVKNVVYKNISGTSATDVAITLNCSEKYPCQGIVLENVKIKGGTASCKNANVKNQGTVSPKCS.

The N-terminal stretch at 1–23 (MARCCRHLAVFLCVLLMLSLCKA) is a signal peptide. PbH1 repeat units lie at residues 223 to 249 (CNKV…HITN) and 250 to 271 (TQNI…SIED). Asp-264 (proton donor) is an active-site residue. His-287 is a catalytic residue. PbH1 repeat units lie at residues 303-324 (VSGI…RIKT), 332-353 (AKNI…IIDQ), and 398-420 (CQGI…NANV).

This sequence belongs to the glycosyl hydrolase 28 family. In terms of tissue distribution, expressed in flower buds and siliques, in the dehiscence zone of anthers (stomium cells) and maturing siliques. Expressed in stigma during pollen tube growth. Not expressed in seeds or in the floral part or leaf abscission zone but found at the junction between the seed and the funiculus at the site of seed abscission.

It localises to the secreted. The protein resides in the cell wall. The protein localises to the cytoplasm. The enzyme catalyses (1,4-alpha-D-galacturonosyl)n+m + H2O = (1,4-alpha-D-galacturonosyl)n + (1,4-alpha-D-galacturonosyl)m.. Functionally, polygalacturonase involved in cell separation in the final stages of pod shatter and in anther dehiscence. Not involved in floral organ abscission. This is Polygalacturonase ADPG1 (ADPG1) from Arabidopsis thaliana (Mouse-ear cress).